The following is a 237-amino-acid chain: Nodulation protein NolA (237 aa).

The region spanning 10–79 (RWRIGELAEA…LVEIRKAMEG (70 aa)) is the HTH merR-type domain. Residues 13–32 (IGELAEATGVTVRTLHHYEH) constitute a DNA-binding region (H-T-H motif).

In terms of biological role, involved in genotype-specific nodulation of soybeans. This chain is Nodulation protein NolA (nolA), found in Bradyrhizobium diazoefficiens (strain JCM 10833 / BCRC 13528 / IAM 13628 / NBRC 14792 / USDA 110).